Consider the following 314-residue polypeptide: Methionyl-tRNA formyltransferase (314 aa).

Residue 111–114 (SLLP) coordinates (6S)-5,6,7,8-tetrahydrofolate.

Belongs to the Fmt family.

The enzyme catalyses L-methionyl-tRNA(fMet) + (6R)-10-formyltetrahydrofolate = N-formyl-L-methionyl-tRNA(fMet) + (6S)-5,6,7,8-tetrahydrofolate + H(+). In terms of biological role, attaches a formyl group to the free amino group of methionyl-tRNA(fMet). The formyl group appears to play a dual role in the initiator identity of N-formylmethionyl-tRNA by promoting its recognition by IF2 and preventing the misappropriation of this tRNA by the elongation apparatus. The polypeptide is Methionyl-tRNA formyltransferase (Chlorobium chlorochromatii (strain CaD3)).